We begin with the raw amino-acid sequence, 276 residues long: Elongation factor Ts (276 aa).

The segment at 79–82 (TDFV) is involved in Mg(2+) ion dislocation from EF-Tu.

This sequence belongs to the EF-Ts family.

The protein localises to the cytoplasm. In terms of biological role, associates with the EF-Tu.GDP complex and induces the exchange of GDP to GTP. It remains bound to the aminoacyl-tRNA.EF-Tu.GTP complex up to the GTP hydrolysis stage on the ribosome. This chain is Elongation factor Ts, found in Buchnera aphidicola subsp. Cinara cedri (strain Cc).